The sequence spans 255 residues: tRNA1(Val) (adenine(37)-N6)-methyltransferase (255 aa).

The protein belongs to the methyltransferase superfamily. tRNA (adenine-N(6)-)-methyltransferase family.

The protein resides in the cytoplasm. The enzyme catalyses adenosine(37) in tRNA1(Val) + S-adenosyl-L-methionine = N(6)-methyladenosine(37) in tRNA1(Val) + S-adenosyl-L-homocysteine + H(+). In terms of biological role, specifically methylates the adenine in position 37 of tRNA(1)(Val) (anticodon cmo5UAC). The chain is tRNA1(Val) (adenine(37)-N6)-methyltransferase from Porphyromonas gingivalis (strain ATCC BAA-308 / W83).